Reading from the N-terminus, the 400-residue chain is Nicotinate phosphoribosyltransferase (400 aa).

A Phosphohistidine; by autocatalysis modification is found at His-220.

It belongs to the NAPRTase family. Post-translationally, transiently phosphorylated on a His residue during the reaction cycle. Phosphorylation strongly increases the affinity for substrates and increases the rate of nicotinate D-ribonucleotide production. Dephosphorylation regenerates the low-affinity form of the enzyme, leading to product release.

The enzyme catalyses nicotinate + 5-phospho-alpha-D-ribose 1-diphosphate + ATP + H2O = nicotinate beta-D-ribonucleotide + ADP + phosphate + diphosphate. It functions in the pathway cofactor biosynthesis; NAD(+) biosynthesis; nicotinate D-ribonucleotide from nicotinate: step 1/1. Functionally, catalyzes the synthesis of beta-nicotinate D-ribonucleotide from nicotinate and 5-phospho-D-ribose 1-phosphate at the expense of ATP. This Escherichia coli O7:K1 (strain IAI39 / ExPEC) protein is Nicotinate phosphoribosyltransferase.